The chain runs to 309 residues: UPF0276 protein RB0508 (309 aa).

It belongs to the UPF0276 family.

In Rhizobium meliloti (strain 1021) (Ensifer meliloti), this protein is UPF0276 protein RB0508.